The following is a 291-amino-acid chain: Porphobilinogen deaminase (291 aa).

Residue Cys237 is modified to S-(dipyrrolylmethanemethyl)cysteine.

The protein belongs to the HMBS family. Monomer. Dipyrromethane serves as cofactor.

The enzyme catalyses 4 porphobilinogen + H2O = hydroxymethylbilane + 4 NH4(+). Its pathway is porphyrin-containing compound metabolism; protoporphyrin-IX biosynthesis; coproporphyrinogen-III from 5-aminolevulinate: step 2/4. Functionally, tetrapolymerization of the monopyrrole PBG into the hydroxymethylbilane pre-uroporphyrinogen in several discrete steps. The sequence is that of Porphobilinogen deaminase from Clostridium perfringens (strain 13 / Type A).